Here is a 115-residue protein sequence, read N- to C-terminus: Large ribosomal subunit protein bL35m (115 aa).

This sequence belongs to the bacterial ribosomal protein bL35 family.

The protein localises to the mitochondrion. The chain is Large ribosomal subunit protein bL35m from Saccharomyces cerevisiae (strain YJM789) (Baker's yeast).